Reading from the N-terminus, the 143-residue chain is D-aminoacyl-tRNA deacylase (143 aa).

The Gly-cisPro motif, important for rejection of L-amino acids signature appears at 135–136 (GP).

The protein belongs to the DTD family. Homodimer.

The protein resides in the cytoplasm. The catalysed reaction is glycyl-tRNA(Ala) + H2O = tRNA(Ala) + glycine + H(+). The enzyme catalyses a D-aminoacyl-tRNA + H2O = a tRNA + a D-alpha-amino acid + H(+). In terms of biological role, an aminoacyl-tRNA editing enzyme that deacylates mischarged D-aminoacyl-tRNAs. Also deacylates mischarged glycyl-tRNA(Ala), protecting cells against glycine mischarging by AlaRS. Acts via tRNA-based rather than protein-based catalysis; rejects L-amino acids rather than detecting D-amino acids in the active site. By recycling D-aminoacyl-tRNA to D-amino acids and free tRNA molecules, this enzyme counteracts the toxicity associated with the formation of D-aminoacyl-tRNA entities in vivo and helps enforce protein L-homochirality. The chain is D-aminoacyl-tRNA deacylase from Mycobacterium bovis (strain BCG / Pasteur 1173P2).